The sequence spans 481 residues: Aspartyl/glutamyl-tRNA(Asn/Gln) amidotransferase subunit B (481 aa).

This sequence belongs to the GatB/GatE family. GatB subfamily. As to quaternary structure, heterotrimer of A, B and C subunits.

The enzyme catalyses L-glutamyl-tRNA(Gln) + L-glutamine + ATP + H2O = L-glutaminyl-tRNA(Gln) + L-glutamate + ADP + phosphate + H(+). It catalyses the reaction L-aspartyl-tRNA(Asn) + L-glutamine + ATP + H2O = L-asparaginyl-tRNA(Asn) + L-glutamate + ADP + phosphate + 2 H(+). In terms of biological role, allows the formation of correctly charged Asn-tRNA(Asn) or Gln-tRNA(Gln) through the transamidation of misacylated Asp-tRNA(Asn) or Glu-tRNA(Gln) in organisms which lack either or both of asparaginyl-tRNA or glutaminyl-tRNA synthetases. The reaction takes place in the presence of glutamine and ATP through an activated phospho-Asp-tRNA(Asn) or phospho-Glu-tRNA(Gln). This chain is Aspartyl/glutamyl-tRNA(Asn/Gln) amidotransferase subunit B, found in Pseudomonas paraeruginosa (strain DSM 24068 / PA7) (Pseudomonas aeruginosa (strain PA7)).